The following is a 133-amino-acid chain: ATP synthase epsilon chain (133 aa).

This sequence belongs to the ATPase epsilon chain family. In terms of assembly, F-type ATPases have 2 components, CF(1) - the catalytic core - and CF(0) - the membrane proton channel. CF(1) has five subunits: alpha(3), beta(3), gamma(1), delta(1), epsilon(1). CF(0) has three main subunits: a, b and c.

The protein resides in the cell membrane. Its function is as follows. Produces ATP from ADP in the presence of a proton gradient across the membrane. The polypeptide is ATP synthase epsilon chain (Clostridium botulinum (strain Langeland / NCTC 10281 / Type F)).